The chain runs to 1218 residues: Probable cation-transporting ATPase 13A5 (1218 aa).

4 helical membrane-spanning segments follow: residues 33–53, 222–242, 401–421, and 433–453; these read KAFC…VFYW, GYIE…VLSV, FIVF…GVYM, and MALI…LTIG. Asp486 (4-aspartylphosphate intermediate) is an active-site residue. Residues Asn540, Asn669, and Asn819 are each glycosylated (N-linked (GlcNAc...) asparagine). The Mg(2+) site is built by Asp850 and Asp854. 6 helical membrane-spanning segments follow: residues 903 to 923, 940 to 956, 973 to 993, 1042 to 1062, 1077 to 1097, and 1115 to 1135; these read FGVF…ALLL, VAIT…THAY, LLLS…SAFL, FETT…AFIF, IFSF…FSDF, and VLIL…EDSI.

It belongs to the cation transport ATPase (P-type) (TC 3.A.3) family. Type V subfamily.

It localises to the membrane. The enzyme catalyses ATP + H2O = ADP + phosphate + H(+). The chain is Probable cation-transporting ATPase 13A5 (ATP13A5) from Homo sapiens (Human).